Consider the following 509-residue polypeptide: Photosystem II CP47 reaction center protein (509 aa).

A run of 6 helical transmembrane segments spans residues 21 to 36 (AVHL…WAGS), 101 to 115 (IILS…IWHW), 140 to 156 (GIHL…FGAF), 203 to 218 (IAAG…FHLT), 237 to 252 (VLSS…AFVT), and 457 to 472 (NFAL…HGGR).

Belongs to the PsbB/PsbC family. PsbB subfamily. PSII is composed of 1 copy each of membrane proteins PsbA, PsbB, PsbC, PsbD, PsbE, PsbF, PsbH, PsbI, PsbJ, PsbK, PsbL, PsbM, PsbT, PsbX, PsbY, PsbZ, Psb30/Ycf12, at least 3 peripheral proteins of the oxygen-evolving complex and a large number of cofactors. It forms dimeric complexes. The cofactor is Binds multiple chlorophylls. PSII binds additional chlorophylls, carotenoids and specific lipids..

It localises to the plastid. It is found in the chloroplast thylakoid membrane. Its function is as follows. One of the components of the core complex of photosystem II (PSII). It binds chlorophyll and helps catalyze the primary light-induced photochemical processes of PSII. PSII is a light-driven water:plastoquinone oxidoreductase, using light energy to abstract electrons from H(2)O, generating O(2) and a proton gradient subsequently used for ATP formation. The protein is Photosystem II CP47 reaction center protein of Trieres chinensis (Marine centric diatom).